A 110-amino-acid polypeptide reads, in one-letter code: MLPVCVDADQALRCSVLWRPWSLSPTEARGHKTLAGGVRSARPSGGVFHHPVRLFLPRSRMQEYLSRLGSSVLASFPVQATLHFYNDEDSSSEEEEDEEHANTRCRLWRP.

The short motif at 18 to 21 (WRPW) is the WRPW motif element. Residues 50 to 85 (HPVRLFLPRSRMQEYLSRLGSSVLASFPVQATLHFY) are ripply homology domain. The span at 87 to 99 (DEDSSSEEEEDEE) shows a compositional bias: acidic residues. The disordered stretch occupies residues 87-110 (DEDSSSEEEEDEEHANTRCRLWRP).

Belongs to the ripply family.

The protein localises to the nucleus. Its function is as follows. Probable transcriptional regulator involved in developmental processes. The chain is Protein ripply3 (ripply3) from Danio rerio (Zebrafish).